Here is a 110-residue protein sequence, read N- to C-terminus: HIT-like protein CPn_0488/CP_0266/CPj0488/CpB0508 (110 aa).

Residues 3–110 (VFKQIIDGLI…LGGRPLGAIA (108 aa)) enclose the HIT domain. The Histidine triad motif motif lies at 95–99 (HLHIH).

The chain is HIT-like protein CPn_0488/CP_0266/CPj0488/CpB0508 from Chlamydia pneumoniae (Chlamydophila pneumoniae).